Consider the following 176-residue polypeptide: RNA pyrophosphohydrolase (176 aa).

The 144-residue stretch at 6 to 149 folds into the Nudix hydrolase domain; sequence GYRPNVGIII…KRNVYEMALT (144 aa). The Nudix box signature appears at 38-59; the sequence is GGIKPGESPEAAMYRELMEEVG.

The protein belongs to the Nudix hydrolase family. RppH subfamily. It depends on a divalent metal cation as a cofactor.

In terms of biological role, accelerates the degradation of transcripts by removing pyrophosphate from the 5'-end of triphosphorylated RNA, leading to a more labile monophosphorylated state that can stimulate subsequent ribonuclease cleavage. In Laribacter hongkongensis (strain HLHK9), this protein is RNA pyrophosphohydrolase.